Reading from the N-terminus, the 660-residue chain is Solute carrier family 5 member 4 (660 aa).

Topologically, residues 1 to 28 (MASTLSPSTVTKTPGPPEISERIQNAAD) are cytoplasmic. Residues 29–47 (ISVIVIYFVVVMAVGLWAM) form a helical membrane-spanning segment. Over 48–64 (LRTNRGTVGGFFLAGRD) the chain is Extracellular. Residues 65-85 (VTWWPMGASLFASNIGSGHFV) traverse the membrane as a helical segment. Over 86 to 105 (GLAGTGAASGIAIAAFEWNA) the chain is Cytoplasmic. The chain crosses the membrane as a helical span at residues 106–126 (LLLLLVLGWFFVPIYIKAGVM). Residues 127–171 (TMPEYLRKRFGGKRLQIYLSILSLFICVALRISSDIFSGAIFIKL) are Extracellular-facing. The helical transmembrane segment at 172 to 191 (ALGLDLYLAIFSLLAITAIY) threads the bilayer. Over 192-208 (TITGGLASVIYTDTLQT) the chain is Cytoplasmic. Residues 209 to 229 (IIMLIGSFILMGFAFVEVGGY) form a helical membrane-spanning segment. Topologically, residues 230-270 (ESFTEKYMNAIPTIVEGDNLTISPKCYTPQGDSFHIFRDAV) are extracellular. N-linked (GlcNAc...) asparagine glycosylation is present at Asn248. A helical transmembrane segment spans residues 271-291 (TGDIPWPGMIFGMTVVAAWYW). The Cytoplasmic segment spans residues 292–314 (CTDQVIVQRCLSGKDMSHVKAAC). The chain crosses the membrane as a helical span at residues 315–334 (IMCGYLKLLPMFLMVMPGMI). Residues 335–423 (SRILYTEKVA…RKQASEKELL (89 aa)) lie on the Extracellular side of the membrane. A helical transmembrane segment spans residues 424-443 (IAGRLFIILLIVISIVWVPL). At 444 to 455 (VQVAQNGQLFHY) the chain is on the cytoplasmic side. The helical transmembrane segment at 456–476 (IESISSYLGPPIAAVFLLAIF) threads the bilayer. Residues 477–526 (CKRVNEQGAFWGLIIGFVMGLIRMIAEFVYGTGSCLAASNCPQIICGVHY) are Extracellular-facing. Residues 527 to 547 (LYFALILFFVSILVVLAISLL) traverse the membrane as a helical segment. Residues 548–638 (TKPIPDVHLY…TDTSEKPLWK (91 aa)) are Cytoplasmic-facing. Residues 639-659 (TIVNINAILLLAVAVFVHGYF) traverse the membrane as a helical segment.

It belongs to the sodium:solute symporter (SSF) (TC 2.A.21) family. As to expression, kidney, intestine, liver, skeletal muscle and spleen.

The protein resides in the cell membrane. It carries out the reaction D-glucose(out) + 2 Na(+)(out) = D-glucose(in) + 2 Na(+)(in). With respect to regulation, inhibited by phlorizin. In terms of biological role, low-affinity sodium/D-glucose symporter with a great selectivity for sugars (D-glucose &gt;&gt; D-galactose). Na(+) and D-glucose transport are tightly coupled at neutral pH, but at acidic pH, ion transport is uncoupled from sugar transport. The protein is Solute carrier family 5 member 4 of Sus scrofa (Pig).